The following is a 646-amino-acid chain: Autophagy-related protein 28 (646 aa).

2 disordered regions span residues 1–148 (MSSP…HVDN) and 221–245 (PTRSTPDGNVIPVRQPVSNKPRGLK). Residues 12 to 21 (SPRQRLSNPL) show a composition bias toward polar residues. The span at 63 to 75 (SATSTRRSSSPAS) shows a compositional bias: low complexity. Positions 106 to 122 (MMMNQHPSRQSTVSSHG) are enriched in polar residues. Coiled coils occupy residues 283–350 (LDKM…MEDV) and 485–514 (QQAAMQSQLSEMDDVVQELQKRLQLAESKH). 2 disordered regions span residues 475–494 (SQAGDADEEPQQAAMQSQLS) and 546–612 (AAAV…RGSA). 2 stretches are compositionally biased toward basic and acidic residues: residues 557–575 (STDKAEGTSQEERADSHDE) and 588–597 (RMEDHDHDPP).

The protein belongs to the ATG28 family.

It is found in the cytoplasm. Its subcellular location is the vacuole membrane. The protein localises to the cytoplasmic vesicle membrane. In terms of biological role, required for the autophagic degradation of peroxisomes called pexophagy, but not essential for general autophagy. Involved in resistance to elevated pH. This is Autophagy-related protein 28 from Gibberella zeae (strain ATCC MYA-4620 / CBS 123657 / FGSC 9075 / NRRL 31084 / PH-1) (Wheat head blight fungus).